A 174-amino-acid chain; its full sequence is Flavodoxin (174 aa).

Residues isoleucine 4–lysine 166 form the Flavodoxin-like domain.

This sequence belongs to the flavodoxin family. FMN is required as a cofactor.

Functionally, low-potential electron donor to a number of redox enzymes. This chain is Flavodoxin (fldA), found in Buchnera aphidicola subsp. Baizongia pistaciae (strain Bp).